Reading from the N-terminus, the 284-residue chain is ADP-polyphosphate phosphotransferase 3 (284 aa).

Basic and acidic residues-rich tracts occupy residues 1-22 (MDKH…RKSA) and 260-277 (DLGK…DTRR). 2 disordered regions span residues 1–32 (MDKH…TRSG) and 260–284 (DLGK…PNLF).

It belongs to the polyphosphate kinase 2 (PPK2) family. Class I subfamily.

The enzyme catalyses [phosphate](n) + ATP = [phosphate](n+1) + ADP. It catalyses the reaction [phosphate](n) + GTP = [phosphate](n+1) + GDP. Its function is as follows. Uses inorganic polyphosphate (polyP) as a donor to convert ADP to ATP. Can also convert GDP to GTP, with lower efficiency. This is ADP-polyphosphate phosphotransferase 3 from Rhizobium meliloti (strain 1021) (Ensifer meliloti).